The chain runs to 28 residues: Ranatuerin-2AVb (28 aa).

A disulfide bridge connects residues Cys23 and Cys28.

In terms of tissue distribution, expressed by the skin glands.

Its subcellular location is the secreted. Its function is as follows. Has antibacterial activity. In Rana arvalis (Moor frog), this protein is Ranatuerin-2AVb.